A 387-amino-acid polypeptide reads, in one-letter code: MDLFEYQARDLFESYGVPVLPGIVADTAEEVRAAAEKLGGTVVVKAQVKTGGRGKAGGVKVAQSADAAFEAAEGILGLDIKGHTVHRVMVAAGARIAQEFYFSILLDRAERSYLCLASYEGGMEIEELAVTRPEALARIEIDPVAGIDAAKAEEIARAASFPEELIAKVAPVFERLWWVYRDEDATLVEVNPLVLTESGEIIALDGKVTLDENAGLRHEGHAALEDAAAADPLEAKAKESDLNYVKLDGQVGIIGNGAGLVMSTLDVVSYAGEQHGGVRPANFLDIGGGASAEVMAAGLDVILGDEQVTSVFVNVFGGITSCDAVANGIVGALDKLGDAATKPLVVRLDGNNVEEGRRILEERAHPLVTVVGTMDEAADKAAELAAA.

One can recognise an ATP-grasp domain in the interval 9–236; sequence RDLFESYGVP…AAAADPLEAK (228 aa). Residues lysine 45, 52–54, alanine 94, and glutamate 99 each bind ATP; that span reads GRG. Mg(2+) contacts are provided by asparagine 191 and aspartate 205. Residues asparagine 256 and 318-320 contribute to the substrate site; that span reads GIT.

This sequence belongs to the succinate/malate CoA ligase beta subunit family. As to quaternary structure, heterotetramer of two alpha and two beta subunits. The cofactor is Mg(2+).

It catalyses the reaction succinate + ATP + CoA = succinyl-CoA + ADP + phosphate. It carries out the reaction GTP + succinate + CoA = succinyl-CoA + GDP + phosphate. It participates in carbohydrate metabolism; tricarboxylic acid cycle; succinate from succinyl-CoA (ligase route): step 1/1. In terms of biological role, succinyl-CoA synthetase functions in the citric acid cycle (TCA), coupling the hydrolysis of succinyl-CoA to the synthesis of either ATP or GTP and thus represents the only step of substrate-level phosphorylation in the TCA. The beta subunit provides nucleotide specificity of the enzyme and binds the substrate succinate, while the binding sites for coenzyme A and phosphate are found in the alpha subunit. The sequence is that of Succinate--CoA ligase [ADP-forming] subunit beta from Clavibacter michiganensis subsp. michiganensis (strain NCPPB 382).